Consider the following 201-residue polypeptide: MDKFTKLTGVAAPLPIVNIDTDMIIPKDYLKTIKRTGLSKGLFAEMRFNEDGTENPDFVLNKPGYRNAQILVAGDNFGCGSSREHAPWALLDFGIRCVISTSFADIFYNNCFKNGILPIKVAQEDLDKLMDDASRGANATLTVDLEAKEIHGPDGGSISFDVDDFKRHCLLNGLDDIGLTMEKAGSIDTFEAKRAELRPWA.

It belongs to the LeuD family. LeuD type 1 subfamily. As to quaternary structure, heterodimer of LeuC and LeuD.

The catalysed reaction is (2R,3S)-3-isopropylmalate = (2S)-2-isopropylmalate. The protein operates within amino-acid biosynthesis; L-leucine biosynthesis; L-leucine from 3-methyl-2-oxobutanoate: step 2/4. Its function is as follows. Catalyzes the isomerization between 2-isopropylmalate and 3-isopropylmalate, via the formation of 2-isopropylmaleate. The chain is 3-isopropylmalate dehydratase small subunit from Brucella anthropi (strain ATCC 49188 / DSM 6882 / CCUG 24695 / JCM 21032 / LMG 3331 / NBRC 15819 / NCTC 12168 / Alc 37) (Ochrobactrum anthropi).